Consider the following 173-residue polypeptide: MQQALFGGGCFWCVEAVFLQIRGVEKVTSGYAGGHTTHPTYEQVCQGDTQHAEVVLIDFDEQQVTYSQLLDVFFATHDPTTLNRQGNDIGTQYRSVIYYFNEEQKQAAEHTIQTLKDDDLDIVTELSPAPTFYPAEDYHQNYYEKNPSQGYCNFAIPPKLLKLHSKFQHLMKN.

Cysteine 10 is a catalytic residue.

This sequence belongs to the MsrA Met sulfoxide reductase family.

The enzyme catalyses L-methionyl-[protein] + [thioredoxin]-disulfide + H2O = L-methionyl-(S)-S-oxide-[protein] + [thioredoxin]-dithiol. It carries out the reaction [thioredoxin]-disulfide + L-methionine + H2O = L-methionine (S)-S-oxide + [thioredoxin]-dithiol. In terms of biological role, has an important function as a repair enzyme for proteins that have been inactivated by oxidation. Catalyzes the reversible oxidation-reduction of methionine sulfoxide in proteins to methionine. This Acinetobacter baumannii (strain AB307-0294) protein is Peptide methionine sulfoxide reductase MsrA.